The sequence spans 436 residues: Serine hydroxymethyltransferase (436 aa).

(6S)-5,6,7,8-tetrahydrofolate-binding positions include Leu133 and 137–139 (GHI). Lys242 is modified (N6-(pyridoxal phosphate)lysine).

This sequence belongs to the SHMT family. Homodimer. It depends on pyridoxal 5'-phosphate as a cofactor.

The protein resides in the cytoplasm. It catalyses the reaction (6R)-5,10-methylene-5,6,7,8-tetrahydrofolate + glycine + H2O = (6S)-5,6,7,8-tetrahydrofolate + L-serine. The protein operates within one-carbon metabolism; tetrahydrofolate interconversion. It functions in the pathway amino-acid biosynthesis; glycine biosynthesis; glycine from L-serine: step 1/1. Its function is as follows. Catalyzes the reversible interconversion of serine and glycine with tetrahydrofolate (THF) serving as the one-carbon carrier. This reaction serves as the major source of one-carbon groups required for the biosynthesis of purines, thymidylate, methionine, and other important biomolecules. Also exhibits THF-independent aldolase activity toward beta-hydroxyamino acids, producing glycine and aldehydes, via a retro-aldol mechanism. The sequence is that of Serine hydroxymethyltransferase from Pelagibacter ubique (strain HTCC1062).